Here is a 266-residue protein sequence, read N- to C-terminus: Shikimate dehydrogenase (NADP(+)) (266 aa).

Residues 14 to 16 (SLS) and Thr61 contribute to the shikimate site. The active-site Proton acceptor is the Lys65. Positions 85 and 100 each coordinate shikimate. Residues 124–128 (GAGGA) and Ala210 each bind NADP(+). Tyr212 contacts shikimate. Gly233 contributes to the NADP(+) binding site.

It belongs to the shikimate dehydrogenase family. Homodimer.

It catalyses the reaction shikimate + NADP(+) = 3-dehydroshikimate + NADPH + H(+). The protein operates within metabolic intermediate biosynthesis; chorismate biosynthesis; chorismate from D-erythrose 4-phosphate and phosphoenolpyruvate: step 4/7. In terms of biological role, involved in the biosynthesis of the chorismate, which leads to the biosynthesis of aromatic amino acids. Catalyzes the reversible NADPH linked reduction of 3-dehydroshikimate (DHSA) to yield shikimate (SA). The protein is Shikimate dehydrogenase (NADP(+)) of Halobacterium salinarum (strain ATCC 29341 / DSM 671 / R1).